Consider the following 164-residue polypeptide: 2-keto-3-deoxy-D-glycero-D-galacto-9-phosphonononic acid phosphatase (164 aa).

Mg(2+) contacts are provided by Asp10 and Asp12. Substrate is bound by residues Thr34, 54–56, 64–67, and Lys80; these read TGE and RAEK. Asp103 serves as a coordination point for Mg(2+). Asn106 is a binding site for substrate.

Belongs to the KdsC family. In terms of assembly, homotetramer. It depends on Mg(2+) as a cofactor.

The enzyme catalyses 3-deoxy-D-glycero-beta-D-galacto-non-2-ulopyranosonate 9-phosphate + H2O = 3-deoxy-D-glycero-beta-D-galacto-non-2-ulopyranosonate + phosphate. Its function is as follows. Involved in the biosynthesis of 2-keto-3-deoxy-D-glycero-D-galacto-nononic acid used in cell-wall polysaccharides. Catalyzes the hydrolysis of 2-keto-3-deoxy-D-glycero-D-galacto-9-phosphonononic acid (KDN-9-P) to yield 2-keto-3-deoxy-D-glycero-D-galacto-nononic acid (KDN). Also able to hydrolyze N-acetylneuraminate-9-phosphate (Neu5NAc-9-P), 2-keto-3-deoxy-D-manno-octulosonate-8-phosphate (KDO-8-P), phosphoenolpyruvate (PEP), gluconate 6-phosphate, tyrosine phosphate ester and glucose-6-P as substrate. This is 2-keto-3-deoxy-D-glycero-D-galacto-9-phosphonononic acid phosphatase from Bacteroides thetaiotaomicron (strain ATCC 29148 / DSM 2079 / JCM 5827 / CCUG 10774 / NCTC 10582 / VPI-5482 / E50).